Consider the following 167-residue polypeptide: Epithelial membrane protein 2 (167 aa).

Residues 1-21 (MLVLLAFIIAFHITSAALLFI) traverse the membrane as a helical segment. 3 N-linked (GlcNAc...) asparagine glycosylation sites follow: asparagine 44, asparagine 47, and asparagine 52. Transmembrane regions (helical) follow at residues 67–87 (TMILSTILCCIAFFIFVLQLF), 95–115 (FVLTSIIQLMSCLCVMIAASI), and 143–163 (YILAWVAFACTFISGMMYLIL).

Belongs to the PMP-22/EMP/MP20 family. As to quaternary structure, interacts with PTK2; regulates PTK2 activation and localization. Interacts with ITGB3; regulates the levels of the heterodimer ITGA5-ITGB3 integrin surface expression. Interacts with P2RX7 (via C-terminus). Interacts with ITGB1; the interaction may be direct or indirect and ITGB1 has a heterodimer form.

It localises to the golgi apparatus membrane. The protein resides in the cell membrane. Its subcellular location is the apical cell membrane. The protein localises to the membrane raft. It is found in the cytoplasm. It localises to the nucleus. The protein resides in the perinuclear region. Functions as a key regulator of cell membrane composition by regulating protein surface expression. Also, plays a role in regulation of processes including cell migration, cell proliferation, cell contraction and cell adhesion. Regulates transepithelial migration of neutrophils into the alveolar lumen, potentially via mediation of cell surface expression of adhesion markers and lipid raft formation. Negatively regulates caveolae formation by reducing CAV1 expression and CAV1 amount by increasing lysosomal degradation. Facilitates surface trafficking and the formation of lipid rafts bearing GPI-anchor proteins. Regulates surface expression of MHC1 and ICAM1 proteins increasing susceptibility to T-cell mediated cytotoxicity. Regulates the plasma membrane expression of the integrin heterodimers ITGA6-ITGB1, ITGA5-ITGB3 and ITGA5-ITGB1 resulting in modulation of cell-matrix adhesion. Also regulates many processes through PTK2. Regulates blood vessel endothelial cell migration and angiogenesis by regulating VEGF protein expression through PTK2 activation. Regulates cell migration and cell contraction through PTK2 and SRC activation. Regulates focal adhesion density, F-actin conformation and cell adhesion capacity through interaction with PTK2. Positively regulates cell proliferation. Plays a role during cell death and cell blebbing. Promotes angiogenesis and vasculogenesis through induction of VEGFA via a HIF1A-dependent pathway. Also plays a role in embryo implantation by regulating surface trafficking of integrin heterodimer ITGA5-ITGB3. Plays a role in placental angiogenesis and uterine natural killer cell regulation at the maternal-fetal placental interface, however not required in the maternal tissues for a viable pregnancy. Involved in the early stages of embryogenic development and cardiogenesis, potentially via regulation of epithelial-mesenchymal transition timing. May play a role in glomerular filtration. This is Epithelial membrane protein 2 (EMP2) from Pan troglodytes (Chimpanzee).